A 427-amino-acid polypeptide reads, in one-letter code: Flotillin-1 (427 aa).

3 positions are modified to phosphoserine: Ser-19, Ser-163, and Ser-385.

The protein belongs to the band 7/mec-2 family. Flotillin subfamily. In terms of assembly, heterooligomeric complex of flotillin-1 and flotillin-2 and caveolin-1 and caveolin-2. Interacts with ECPAS.

It localises to the cell membrane. The protein localises to the endosome. It is found in the membrane. The protein resides in the caveola. Its subcellular location is the melanosome. It localises to the membrane raft. Its function is as follows. May act as a scaffolding protein within caveolar membranes, functionally participating in formation of caveolae or caveolae-like vesicles. The chain is Flotillin-1 (FLOT1) from Bos taurus (Bovine).